Here is a 567-residue protein sequence, read N- to C-terminus: GBF-interacting protein 1 (567 aa).

3 disordered regions span residues 70–150 (ERKK…PSGI), 164–192 (DKVD…SKES), and 545–567 (PIGP…GNNY). Composition is skewed to polar residues over residues 91-102 (FASSYTDASNGR) and 121-136 (TASS…TKPS). Basic and acidic residues predominate over residues 182–191 (DVVEPDKSKE). Residues 550-567 (HVTNQQPQAARTNLGNNY) are compositionally biased toward polar residues.

This sequence belongs to the GIP1 family. Monomer, homodimer, homooligomer. Under non-reducing conditions, predominantly present in high molecular weight forms, but predominates in low molecular weight monomers under reducing conditions. Interacts with BZIP16, BZIP68 and GBF1. Interacts with LBD18. As to expression, expressed in roots, leaves, stems and flowers.

Its subcellular location is the nucleus. Plant specific protein that enhances G-box-binding factor (GBF) DNA binding activity. May function as a nuclear chaperone or lever and regulate the multimeric state of GBFs. May contribute to bZIP-mediated gene regulation. Is able to refold denatured rhodanese in vitro. Reduces DNA-binding activity of BZIP16, BZIP68 and GBF1 under non-reducing conditions through direct physical interaction. Acts as a negative co-regulator in red and blue light-mediated hypocotyl elongation. Functions to promote hypocotyl elongation during the early stages of seedling development by regulating the repression effect by BZIP16 and the activation effect by BZIP68 and GBF1 on LHCB2.4 expression. Enhances transcriptional activity of LBD18 in the EXP14 promoter. May act as a transcriptional coactivator of LBD18. This is GBF-interacting protein 1 from Arabidopsis thaliana (Mouse-ear cress).